Here is a 257-residue protein sequence, read N- to C-terminus: Protein IMPACT homolog (257 aa).

One can recognise an RWD domain in the interval 9–102; sequence AEIESLASIF…SLVQDFIRDL (94 aa).

The protein belongs to the IMPACT family. In terms of assembly, interacts with gcn-1; prevents the interaction of gcn-1 with gcn-2 and inhibits gcn-2 kinase activity. Interaction with rpl-39; this interaction occurs in a gcn-1-independent manner. Associates with ribosomes; this interaction occurs in a gcn-1-independent manner. Associates with actin; this interaction occurs in a gcn-1-independent manner.

The protein resides in the cytoplasm. In terms of biological role, translational regulator that ensures constant high levels of translation under amino acid starvation. Plays a role as a negative regulator of the gcn-2 kinase activity; impairs gcn-1-mediated gcn-2 activation, and hence gcn-2-mediated eIF-2-alpha phosphorylation and subsequent down-regulation of protein synthesis in amino acid-starved cells. Plays a role in differentiation of neuronal cells by stimulating neurite outgrowth. This chain is Protein IMPACT homolog, found in Caenorhabditis elegans.